The chain runs to 386 residues: Tetratricopeptide repeat protein 4 (386 aa).

An N-acetylmethionine modification is found at Met-1. Ser-51 carries the phosphoserine modification. TPR repeat units follow at residues 79 to 112 (AKTY…KCAD), 117 to 150 (AVLY…KPGH), and 151 to 184 (LKAI…DAKE). Ser-244 is modified (phosphoserine).

Belongs to the TTC4 family. In terms of assembly, interacts (via TPR repeats) with HSP90AB1. Interacts with HSPA8, CDC6 and TBK1. Interacts with isoform 1 and isoform 3 of MSL1. As to expression, expressed at high levels in the heart, testis, kidney, brain and tongue. Expressed at low levels in the stomach, lung and liver.

The protein localises to the nucleus. Its subcellular location is the nucleoplasm. It localises to the cytoplasm. In terms of biological role, may act as a co-chaperone for HSP90AB1. This chain is Tetratricopeptide repeat protein 4 (Ttc4), found in Mus musculus (Mouse).